The sequence spans 276 residues: NAD kinase (276 aa).

The active-site Proton acceptor is Asp61. Residues 61-62 (DG), 134-135 (ND), Arg145, Lys162, Asp164, Val172, 175-180 (TAYSFS), and Gln234 each bind NAD(+).

The protein belongs to the NAD kinase family. The cofactor is a divalent metal cation.

Its subcellular location is the cytoplasm. It carries out the reaction NAD(+) + ATP = ADP + NADP(+) + H(+). Functionally, involved in the regulation of the intracellular balance of NAD and NADP, and is a key enzyme in the biosynthesis of NADP. Catalyzes specifically the phosphorylation on 2'-hydroxyl of the adenosine moiety of NAD to yield NADP. The chain is NAD kinase from Clostridium perfringens (strain ATCC 13124 / DSM 756 / JCM 1290 / NCIMB 6125 / NCTC 8237 / Type A).